The chain runs to 216 residues: Orotate phosphoribosyltransferase (216 aa).

Lys30 contacts 5-phospho-alpha-D-ribose 1-diphosphate. Orotate is bound at residue 38-39 (FF). Residues 75–76 (YK), Arg102, Lys103, Lys106, His108, and 128–136 (DDVITAGTA) contribute to the 5-phospho-alpha-D-ribose 1-diphosphate site. The orotate site is built by Thr132 and Arg160.

The protein belongs to the purine/pyrimidine phosphoribosyltransferase family. PyrE subfamily. As to quaternary structure, homodimer. Mg(2+) serves as cofactor.

The catalysed reaction is orotidine 5'-phosphate + diphosphate = orotate + 5-phospho-alpha-D-ribose 1-diphosphate. The protein operates within pyrimidine metabolism; UMP biosynthesis via de novo pathway; UMP from orotate: step 1/2. Its function is as follows. Catalyzes the transfer of a ribosyl phosphate group from 5-phosphoribose 1-diphosphate to orotate, leading to the formation of orotidine monophosphate (OMP). The chain is Orotate phosphoribosyltransferase from Acinetobacter baumannii (strain ACICU).